The chain runs to 108 residues: Flagellar hook-basal body complex protein FliE (108 aa).

This sequence belongs to the FliE family.

Its subcellular location is the bacterial flagellum basal body. The protein is Flagellar hook-basal body complex protein FliE of Pseudomonas fluorescens (strain ATCC BAA-477 / NRRL B-23932 / Pf-5).